The chain runs to 357 residues: DNA integrity scanning protein DisA (357 aa).

One can recognise a DAC domain in the interval 8–146; sequence VKSMINILQL…GNLRYTLKDI (139 aa). ATP-binding positions include Gly-75, Leu-93, and 106 to 110; that span reads MRHRT.

The protein belongs to the DisA family. Homooctamer. The cofactor is Mg(2+).

The enzyme catalyses 2 ATP = 3',3'-c-di-AMP + 2 diphosphate. In terms of biological role, participates in a DNA-damage check-point that is active prior to asymmetric division when DNA is damaged. DisA forms globular foci that rapidly scan along the chromosomes during sporulation, searching for lesions. When a lesion is present, DisA pauses at the lesion site. This triggers a cellular response that culminates in a temporary block in sporulation initiation. Also has diadenylate cyclase activity, catalyzing the condensation of 2 ATP molecules into cyclic di-AMP (c-di-AMP). c-di-AMP acts as a signaling molecule that couples DNA integrity with progression of sporulation. The rise in c-di-AMP level generated by DisA while scanning the chromosome, operates as a positive signal that advances sporulation; upon encountering a lesion, the DisA focus arrests at the damaged site and halts c-di-AMP synthesis. The chain is DNA integrity scanning protein DisA from Bacillus anthracis (strain CDC 684 / NRRL 3495).